Here is a 198-residue protein sequence, read N- to C-terminus: Penicillin-binding protein activator LpoB (198 aa).

The first 20 residues, 1-20, serve as a signal peptide directing secretion; it reads MSWIRIRRSGVLLLALVLSG. Residue C21 is the site of N-palmitoyl cysteine attachment. Residue C21 is the site of S-diacylglycerol cysteine attachment. Residues 28 to 62 are disordered; it reads PQPAAPVEPVTPPVNVPQPPKAEPGQNVPPPPKMQ. The segment covering 30–61 has biased composition (pro residues); sequence PAAPVEPVTPPVNVPQPPKAEPGQNVPPPPKM.

The protein belongs to the LpoB family. In terms of assembly, interacts with PBP1b.

The protein resides in the cell outer membrane. Its function is as follows. Regulator of peptidoglycan synthesis that is essential for the function of penicillin-binding protein 1B (PBP1b). This chain is Penicillin-binding protein activator LpoB, found in Erwinia amylovora (strain CFBP1430).